The chain runs to 135 residues: UPF0102 protein Aave_0630 (135 aa).

The interval 1 to 21 (MGILEKKTAGPGGAARKTTTR) is disordered.

Belongs to the UPF0102 family.

This is UPF0102 protein Aave_0630 from Paracidovorax citrulli (strain AAC00-1) (Acidovorax citrulli).